A 350-amino-acid polypeptide reads, in one-letter code: MSTVQTVLGTITPNLLGRTLTHEHVALDFEHFYRPPPPDFESELKAKISMSTLGYVRLYPYSSKENVRFYDGEALEAAKKDVLLYKKHGGGSIVENSSYGLKRNLEFIVELAKSTGVHFIAGTGHYIHAMQDASHGSLTVEQMSDLYSKDIITGLQVNGKVVKCGFIGEVASVYPIHDFEKNAIKAAGEIQEVLGCGVSMHPHRVTKAPFEIMRLYLEAGGRADKCVMSHLDRTIFDIDELLEFAKLGCYIQYDLFGTECSFYQLNTSVDMISDGQRIDNLIKLIKEGLVDKLLMSHDIHTKHRLTSYGGHGYHHIHTNILPRMFDRGVTLEQVEQITVTNPANWLAFDP.

6 residues coordinate a divalent metal cation: H22, H24, E169, H201, H230, and D298.

The protein belongs to the metallo-dependent hydrolases superfamily. Phosphotriesterase family. A divalent metal cation is required as a cofactor.

This chain is Phosphotriesterase-related protein, found in Drosophila sechellia (Fruit fly).